The chain runs to 294 residues: Syntaxin-19 (294 aa).

The 63-residue stretch at 209–271 (LSEIEQRHKE…NNTKEKFGLA (63 aa)) folds into the t-SNARE coiled-coil homology domain.

This sequence belongs to the syntaxin family. In terms of assembly, interacts with EGFR.

Its subcellular location is the cell membrane. It localises to the cytoplasm. In terms of biological role, plays a role in endosomal trafficking of the epidermal growth factor receptor (EGFR). The polypeptide is Syntaxin-19 (STX19) (Pongo abelii (Sumatran orangutan)).